The sequence spans 132 residues: Small ribosomal subunit protein uS8 (132 aa).

It belongs to the universal ribosomal protein uS8 family. In terms of assembly, part of the 30S ribosomal subunit. Contacts proteins S5 and S12.

Functionally, one of the primary rRNA binding proteins, it binds directly to 16S rRNA central domain where it helps coordinate assembly of the platform of the 30S subunit. This chain is Small ribosomal subunit protein uS8, found in Mesorhizobium japonicum (strain LMG 29417 / CECT 9101 / MAFF 303099) (Mesorhizobium loti (strain MAFF 303099)).